Here is a 126-residue protein sequence, read N- to C-terminus: Holo-[acyl-carrier-protein] synthase (126 aa).

Mg(2+) is bound by residues Asp-9 and Glu-59.

This sequence belongs to the P-Pant transferase superfamily. AcpS family. It depends on Mg(2+) as a cofactor.

The protein localises to the cytoplasm. It carries out the reaction apo-[ACP] + CoA = holo-[ACP] + adenosine 3',5'-bisphosphate + H(+). In terms of biological role, transfers the 4'-phosphopantetheine moiety from coenzyme A to a Ser of acyl-carrier-protein. In Myxococcus xanthus (strain DK1622), this protein is Holo-[acyl-carrier-protein] synthase.